The primary structure comprises 177 residues: Crossover junction endodeoxyribonuclease RuvC (177 aa).

Catalysis depends on residues Asp-8, Glu-72, and Asp-144. Residues Asp-8, Glu-72, and Asp-144 each contribute to the Mg(2+) site.

Belongs to the RuvC family. Homodimer which binds Holliday junction (HJ) DNA. The HJ becomes 2-fold symmetrical on binding to RuvC with unstacked arms; it has a different conformation from HJ DNA in complex with RuvA. In the full resolvosome a probable DNA-RuvA(4)-RuvB(12)-RuvC(2) complex forms which resolves the HJ. It depends on Mg(2+) as a cofactor.

It is found in the cytoplasm. The enzyme catalyses Endonucleolytic cleavage at a junction such as a reciprocal single-stranded crossover between two homologous DNA duplexes (Holliday junction).. Functionally, the RuvA-RuvB-RuvC complex processes Holliday junction (HJ) DNA during genetic recombination and DNA repair. Endonuclease that resolves HJ intermediates. Cleaves cruciform DNA by making single-stranded nicks across the HJ at symmetrical positions within the homologous arms, yielding a 5'-phosphate and a 3'-hydroxyl group; requires a central core of homology in the junction. The consensus cleavage sequence is 5'-(A/T)TT(C/G)-3'. Cleavage occurs on the 3'-side of the TT dinucleotide at the point of strand exchange. HJ branch migration catalyzed by RuvA-RuvB allows RuvC to scan DNA until it finds its consensus sequence, where it cleaves and resolves the cruciform DNA. This is Crossover junction endodeoxyribonuclease RuvC from Teredinibacter turnerae (strain ATCC 39867 / T7901).